A 396-amino-acid polypeptide reads, in one-letter code: S-adenosylmethionine synthase (396 aa).

Residue H16 coordinates ATP. D18 provides a ligand contact to Mg(2+). A K(+)-binding site is contributed by E44. 2 residues coordinate L-methionine: E57 and Q100. A flexible loop region spans residues 100-110 (QSPDIAQGVDD). ATP-binding positions include 174–176 (DAK), 241–242 (RF), D250, 256–257 (RK), A273, and K277. D250 is an L-methionine binding site. K281 contributes to the L-methionine binding site.

This sequence belongs to the AdoMet synthase family. Homotetramer; dimer of dimers. Mg(2+) is required as a cofactor. The cofactor is K(+).

The protein resides in the cytoplasm. It carries out the reaction L-methionine + ATP + H2O = S-adenosyl-L-methionine + phosphate + diphosphate. The protein operates within amino-acid biosynthesis; S-adenosyl-L-methionine biosynthesis; S-adenosyl-L-methionine from L-methionine: step 1/1. Catalyzes the formation of S-adenosylmethionine (AdoMet) from methionine and ATP. The overall synthetic reaction is composed of two sequential steps, AdoMet formation and the subsequent tripolyphosphate hydrolysis which occurs prior to release of AdoMet from the enzyme. This chain is S-adenosylmethionine synthase, found in Pediococcus pentosaceus (strain ATCC 25745 / CCUG 21536 / LMG 10740 / 183-1w).